The sequence spans 601 residues: Uptake hydrogenase large subunit (601 aa).

Cysteine 74, cysteine 77, cysteine 580, and cysteine 583 together coordinate Ni(2+).

This sequence belongs to the [NiFe]/[NiFeSe] hydrogenase large subunit family. As to quaternary structure, heterodimer of a large and a small subunit. Ni(2+) serves as cofactor.

The protein resides in the cell membrane. It carries out the reaction H2 + A = AH2. In terms of biological role, this enzyme recycles the H(2) produced by nitrogenase to increase the production of ATP and to protect nitrogenase against inhibition or damage by O(2) under carbon- or phosphate-limited conditions. This Azotobacter chroococcum mcd 1 protein is Uptake hydrogenase large subunit (hupL).